The following is a 732-amino-acid chain: Conidiogenone synthase (732 aa).

The interval 1–311 is terpene cyclase; the sequence is MADKITDEYA…SLCVPRYCKV (311 aa). Mg(2+) is bound at residue Asp97. Substrate contacts are provided by residues Asp97, 169-172, Asn213, 217-221, and 307-308; these read RIVD, SWDKE, and RY. The short motif at 97–101 is the DDXXD 1 element; it reads DALNQ. Residues 213–221 carry the NSE/DTE motif; it reads NDLFSWDKE. The segment at 312-732 is prenyltransferase; that stretch reads DRNPYKDHLE…LRAMEETLQK (421 aa). A disordered region spans residues 348 to 370; it reads KQSELKDPSSSTYKSHFSPLEPN. 3 residues coordinate isopentenyl diphosphate: Lys402, Arg405, and His434. Asp441 and Asp445 together coordinate Mg(2+). The short motif at 441–445 is the DDXXD 2 element; the sequence is DDIQD. A dimethylallyl diphosphate-binding site is contributed by Arg450. Residue Arg451 participates in isopentenyl diphosphate binding. Residues Lys529, Thr530, Gln565, Asn572, Lys582, and Lys592 each coordinate dimethylallyl diphosphate.

It in the N-terminal section; belongs to the terpene synthase family. The protein in the C-terminal section; belongs to the FPP/GGPP synthase family. In terms of assembly, hexamer. The cofactor is Mg(2+).

The catalysed reaction is isopentenyl diphosphate + (2E,6E)-farnesyl diphosphate = (2E,6E,10E)-geranylgeranyl diphosphate + diphosphate. Its pathway is secondary metabolite biosynthesis; terpenoid biosynthesis. Its function is as follows. Bifunctional terpene synthase; part of the gene cluster that mediates the biosynthesis of conidiogenone, a diterpene known to induce the conidiation. The bifunctional terpene synthase PchDS converts isopentenyl diphosphate (IPP) and dimethylallyl diphosphate (DMAPP) into deoxyconidiogenol. The C-terminal prenyltransferase (PT) domain of PchDS catalyzes formation of GGPP, whereas the N-terminal terpene cyclase (TC) domain catalyzes the cyclization of GGPP into deoxyconidiogenol. The cytochrome P450 monooxygenase PchP450 then catalyzes two rounds of oxidation to furnish conidiogenone. This Penicillium rubens (strain ATCC 28089 / DSM 1075 / NRRL 1951 / Wisconsin 54-1255) (Penicillium chrysogenum) protein is Conidiogenone synthase.